The sequence spans 423 residues: Serine--tRNA ligase (423 aa).

229–231 lines the L-serine pocket; that stretch reads TAE. 258 to 260 contacts ATP; that stretch reads RRE. Residue Glu281 coordinates L-serine. 345-348 lines the ATP pocket; sequence EISS. Ser379 lines the L-serine pocket.

The protein belongs to the class-II aminoacyl-tRNA synthetase family. Type-1 seryl-tRNA synthetase subfamily. Homodimer. The tRNA molecule binds across the dimer.

The protein localises to the cytoplasm. It catalyses the reaction tRNA(Ser) + L-serine + ATP = L-seryl-tRNA(Ser) + AMP + diphosphate + H(+). It carries out the reaction tRNA(Sec) + L-serine + ATP = L-seryl-tRNA(Sec) + AMP + diphosphate + H(+). Its pathway is aminoacyl-tRNA biosynthesis; selenocysteinyl-tRNA(Sec) biosynthesis; L-seryl-tRNA(Sec) from L-serine and tRNA(Sec): step 1/1. Catalyzes the attachment of serine to tRNA(Ser). Is also able to aminoacylate tRNA(Sec) with serine, to form the misacylated tRNA L-seryl-tRNA(Sec), which will be further converted into selenocysteinyl-tRNA(Sec). This chain is Serine--tRNA ligase (serS1), found in Methanosarcina barkeri (strain Fusaro / DSM 804).